The sequence spans 158 residues: 6,7-dimethyl-8-ribityllumazine synthase (158 aa).

5-amino-6-(D-ribitylamino)uracil is bound by residues W27, 58-60, and 81-83; these read SFE and VII. 86-87 is a (2S)-2-hydroxy-3-oxobutyl phosphate binding site; sequence GT. Catalysis depends on H89, which acts as the Proton donor. Residue F114 participates in 5-amino-6-(D-ribitylamino)uracil binding. R128 is a binding site for (2S)-2-hydroxy-3-oxobutyl phosphate.

It belongs to the DMRL synthase family.

It catalyses the reaction (2S)-2-hydroxy-3-oxobutyl phosphate + 5-amino-6-(D-ribitylamino)uracil = 6,7-dimethyl-8-(1-D-ribityl)lumazine + phosphate + 2 H2O + H(+). It functions in the pathway cofactor biosynthesis; riboflavin biosynthesis; riboflavin from 2-hydroxy-3-oxobutyl phosphate and 5-amino-6-(D-ribitylamino)uracil: step 1/2. Functionally, catalyzes the formation of 6,7-dimethyl-8-ribityllumazine by condensation of 5-amino-6-(D-ribitylamino)uracil with 3,4-dihydroxy-2-butanone 4-phosphate. This is the penultimate step in the biosynthesis of riboflavin. The polypeptide is 6,7-dimethyl-8-ribityllumazine synthase (Leifsonia xyli subsp. xyli (strain CTCB07)).